The sequence spans 188 residues: Threonylcarbamoyl-AMP synthase (188 aa).

The 186-residue stretch at 3–188 (QLSSTQVTPV…RSGLVLRNGQ (186 aa)) folds into the YrdC-like domain.

The protein belongs to the SUA5 family. TsaC subfamily.

The protein resides in the cytoplasm. The enzyme catalyses L-threonine + hydrogencarbonate + ATP = L-threonylcarbamoyladenylate + diphosphate + H2O. Functionally, required for the formation of a threonylcarbamoyl group on adenosine at position 37 (t(6)A37) in tRNAs that read codons beginning with adenine. Catalyzes the conversion of L-threonine, HCO(3)(-)/CO(2) and ATP to give threonylcarbamoyl-AMP (TC-AMP) as the acyladenylate intermediate, with the release of diphosphate. In Shewanella denitrificans (strain OS217 / ATCC BAA-1090 / DSM 15013), this protein is Threonylcarbamoyl-AMP synthase.